Reading from the N-terminus, the 511-residue chain is Histidine ammonia-lyase (511 aa).

The 5-imidazolinone (Ala-Gly) cross-link spans 143-145; the sequence is ASG. Residue Ser-144 is modified to 2,3-didehydroalanine (Ser).

The protein belongs to the PAL/histidase family. Contains an active site 4-methylidene-imidazol-5-one (MIO), which is formed autocatalytically by cyclization and dehydration of residues Ala-Ser-Gly.

Its subcellular location is the cytoplasm. It carries out the reaction L-histidine = trans-urocanate + NH4(+). The protein operates within amino-acid degradation; L-histidine degradation into L-glutamate; N-formimidoyl-L-glutamate from L-histidine: step 1/3. The polypeptide is Histidine ammonia-lyase (Vibrio parahaemolyticus serotype O3:K6 (strain RIMD 2210633)).